Consider the following 57-residue polypeptide: uncharacterized protein (57 aa).

This is an uncharacterized protein from Saccharomyces cerevisiae (strain ATCC 204508 / S288c) (Baker's yeast).